We begin with the raw amino-acid sequence, 749 residues long: Photosystem I P700 chlorophyll a apoprotein A1 (749 aa).

A run of 8 helical transmembrane segments spans residues 70–93, 156–179, 195–219, 291–309, 346–369, 385–411, 433–455, and 531–549; these read VFSAHFGQLAVIFIWLSGMYFHGA, LYATAIGGLVMATLMLIAGWFHYH, LNHHLAGLLGLGSLSWAGHQIHVSL, TAHHHLAIAVLFIVAGHMY, WHAQLAINLATLGSLTIIVAHHMY, LSLFTHHMWIGGFCVVGAGAHAAIFLV, AIISHLNWVCIFLGFHSFGLYIH, and FLVHHIHAFTIHVTVLILL. C573 and C582 together coordinate [4Fe-4S] cluster. The next 2 membrane-spanning stretches (helical) occupy residues 589-610 and 663-685; these read HVFLGLFWMYNAISVVIFHFSW and LSAYGLVFLGAHFIWAFSLMFLF. Residue H674 coordinates chlorophyll a'. The chlorophyll a site is built by M682 and Y690. W691 is a binding site for phylloquinone. A helical membrane pass occupies residues 723–743; the sequence is AVGVAHYLLGGIATTWAFFLA.

Belongs to the PsaA/PsaB family. As to quaternary structure, the PsaA/B heterodimer binds the P700 chlorophyll special pair and subsequent electron acceptors. PSI consists of a core antenna complex that captures photons, and an electron transfer chain that converts photonic excitation into a charge separation. The eukaryotic PSI reaction center is composed of at least 11 subunits. P700 is a chlorophyll a/chlorophyll a' dimer, A0 is one or more chlorophyll a, A1 is one or both phylloquinones and FX is a shared 4Fe-4S iron-sulfur center. serves as cofactor.

The protein localises to the plastid. It localises to the chloroplast thylakoid membrane. The enzyme catalyses reduced [plastocyanin] + hnu + oxidized [2Fe-2S]-[ferredoxin] = oxidized [plastocyanin] + reduced [2Fe-2S]-[ferredoxin]. Its function is as follows. PsaA and PsaB bind P700, the primary electron donor of photosystem I (PSI), as well as the electron acceptors A0, A1 and FX. PSI is a plastocyanin-ferredoxin oxidoreductase, converting photonic excitation into a charge separation, which transfers an electron from the donor P700 chlorophyll pair to the spectroscopically characterized acceptors A0, A1, FX, FA and FB in turn. Oxidized P700 is reduced on the lumenal side of the thylakoid membrane by plastocyanin. The protein is Photosystem I P700 chlorophyll a apoprotein A1 of Zygnema circumcarinatum (Green alga).